The sequence spans 530 residues: Light-harvesting complex I LH38 proteins (530 aa).

Its subcellular location is the plastid. It localises to the chloroplast. The sequence is that of Light-harvesting complex I LH38 proteins from Euglena gracilis.